A 211-amino-acid chain; its full sequence is Small ribosomal subunit protein uS3 (211 aa).

Residues 38-106 enclose the KH type-2 domain; the sequence is LRNFLKKRLY…EVYLNIQEVR (69 aa).

This sequence belongs to the universal ribosomal protein uS3 family. In terms of assembly, part of the 30S ribosomal subunit. Forms a tight complex with proteins S10 and S14.

Its function is as follows. Binds the lower part of the 30S subunit head. Binds mRNA in the 70S ribosome, positioning it for translation. The protein is Small ribosomal subunit protein uS3 of Citrifermentans bemidjiense (strain ATCC BAA-1014 / DSM 16622 / JCM 12645 / Bem) (Geobacter bemidjiensis).